The primary structure comprises 222 residues: 2-hydroxypent-2,4-dienoate hydratase (222 aa).

It belongs to the hydratase/decarboxylase family.

It functions in the pathway aromatic compound metabolism; benzoate degradation via hydroxylation. Conversion of 2-hydroxypent-2,4-dienoate into 4-hydroxy-2-oxopentanoate. This is 2-hydroxypent-2,4-dienoate hydratase (xylJ) from Pseudomonas putida (Arthrobacter siderocapsulatus).